Here is a 334-residue protein sequence, read N- to C-terminus: F-box protein AUF1 (334 aa).

The region spanning 1–49 (MDAFDAIPDPVVIDILNRVGDVKTLIRCRSVSKRFNSLATQSESLLLQL) is the F-box domain.

Part of a SCF (ASK-cullin-F-box) protein ligase complex. Interacts with SKP1A/ASK1, SKP1B/ASK2, ASK11 and ASK13.

The protein localises to the nucleus. It participates in protein modification; protein ubiquitination. Its function is as follows. Component of SCF(ASK-cullin-F-box) E3 ubiquitin ligase complexes, which may mediate the ubiquitination and subsequent proteasomal degradation of target proteins. Involved in the control of basipetal and acropetal auxin transport by promoting the distribution and expression of the auxin transporter PIN2. Promotes cytokinin-mediated cell expansion in the root elongation and differentiation zone, without affecting root cell division. The sequence is that of F-box protein AUF1 from Arabidopsis thaliana (Mouse-ear cress).